Here is a 291-residue protein sequence, read N- to C-terminus: Bifunctional protein FolD 1 (291 aa).

NADP(+)-binding positions include 167–169, Ile192, and Ile233; that span reads GAS.

The protein belongs to the tetrahydrofolate dehydrogenase/cyclohydrolase family. Homodimer.

It carries out the reaction (6R)-5,10-methylene-5,6,7,8-tetrahydrofolate + NADP(+) = (6R)-5,10-methenyltetrahydrofolate + NADPH. It catalyses the reaction (6R)-5,10-methenyltetrahydrofolate + H2O = (6R)-10-formyltetrahydrofolate + H(+). The protein operates within one-carbon metabolism; tetrahydrofolate interconversion. In terms of biological role, catalyzes the oxidation of 5,10-methylenetetrahydrofolate to 5,10-methenyltetrahydrofolate and then the hydrolysis of 5,10-methenyltetrahydrofolate to 10-formyltetrahydrofolate. This is Bifunctional protein FolD 1 from Pseudomonas putida (strain ATCC 47054 / DSM 6125 / CFBP 8728 / NCIMB 11950 / KT2440).